Consider the following 118-residue polypeptide: Large ribosomal subunit protein bL20 (118 aa).

This sequence belongs to the bacterial ribosomal protein bL20 family.

In terms of biological role, binds directly to 23S ribosomal RNA and is necessary for the in vitro assembly process of the 50S ribosomal subunit. It is not involved in the protein synthesizing functions of that subunit. This Shewanella baltica (strain OS223) protein is Large ribosomal subunit protein bL20.